The following is a 160-amino-acid chain: Transcriptional repressor NrdR (160 aa).

A zinc finger lies at Cys-3–Cys-34. In terms of domain architecture, ATP-cone spans Pro-49–Glu-139.

Belongs to the NrdR family. Zn(2+) is required as a cofactor.

Negatively regulates transcription of bacterial ribonucleotide reductase nrd genes and operons by binding to NrdR-boxes. The protein is Transcriptional repressor NrdR of Bordetella bronchiseptica (strain ATCC BAA-588 / NCTC 13252 / RB50) (Alcaligenes bronchisepticus).